The chain runs to 591 residues: V-type ATP synthase alpha chain (591 aa).

Position 242–249 (242–249) interacts with ATP; that stretch reads GPFGAGKT.

This sequence belongs to the ATPase alpha/beta chains family.

The enzyme catalyses ATP + H2O + 4 H(+)(in) = ADP + phosphate + 5 H(+)(out). Produces ATP from ADP in the presence of a proton gradient across the membrane. The V-type alpha chain is a catalytic subunit. This is V-type ATP synthase alpha chain from Chlamydia trachomatis serovar A (strain ATCC VR-571B / DSM 19440 / HAR-13).